We begin with the raw amino-acid sequence, 131 residues long: MMTDIIADSLTRIRNAAQRRLDVTTLLHSNTIEATVAIFVDKGYLESYKVKEDGNKKTIKVVLKYDDNEKSVINEIKKISKPGRRVHQGKDEIRTFKNGYGTLVVSTSQGVLANDEAYKRGIGGEVICSIW.

The protein belongs to the universal ribosomal protein uS8 family. As to quaternary structure, part of the 30S ribosomal subunit. Contacts proteins S5 and S12.

One of the primary rRNA binding proteins, it binds directly to 16S rRNA central domain where it helps coordinate assembly of the platform of the 30S subunit. This Sulfurovum sp. (strain NBC37-1) protein is Small ribosomal subunit protein uS8.